Reading from the N-terminus, the 92-residue chain is LYR motif-containing protein 4 homolog (92 aa).

Residues 48-68 adopt a coiled-coil conformation; it reads AEIDRQMAEGQQNLELIRRQV.

This sequence belongs to the complex I LYR family. In terms of assembly, component of the mitochondrial core iron-sulfur cluster (ISC) assembly complex at least composed of the cysteine desulfurase Nfs1, the scaffold protein IscU, the accessory protein bcn92/Isd11/Lyrm4, and probably fh/frataxin. Interacts with Nfs1.

The protein localises to the mitochondrion. Stabilizing factor of the core iron-sulfur cluster (ISC) assembly complex that regulates the stability and cysteine desulfurase activity of Nfs1 and participates in the [2Fe-2S] clusters assembly on the scaffolding protein IscU. This chain is LYR motif-containing protein 4 homolog, found in Drosophila melanogaster (Fruit fly).